The primary structure comprises 98 residues: Feather keratin (98 aa).

Residue Ala1 is modified to N-acetylalanine.

The protein belongs to the avian keratin family. As to quaternary structure, the avian keratins (F-ker, S-ker, C-ker and B-ker) are a complex mixture of very similar polypeptides.

The protein is Feather keratin of Chroicocephalus novaehollandiae (Silver gull).